The following is a 61-amino-acid chain: Large ribosomal subunit protein bL32 (61 aa).

Basic residues predominate over residues 1–19 (MAHPKRRQSKTRTAKRRTH). The disordered stretch occupies residues 1 to 20 (MAHPKRRQSKTRTAKRRTHD).

It belongs to the bacterial ribosomal protein bL32 family.

The protein is Large ribosomal subunit protein bL32 of Porphyromonas gingivalis (strain ATCC 33277 / DSM 20709 / CIP 103683 / JCM 12257 / NCTC 11834 / 2561).